The chain runs to 232 residues: MAKKIFTSALGTAEPYAYIAKPDYGNEERGFGNPRGVYKVDLTIPNKDPRCQRMVDEIVKCHEEAYAAAVEEYEANPPAVARGKKPLKPYEGDMPFFDNGDGTTTFKFKCYASFQDKKTKETKHINLVVVDSKGKKMEDVPIIGGGSKLKVKYSLVPYKWNTAVGASVKLQLESVMLVELATFGGGEDDWADEVEENGYVASGSAKASKPRDEESWDEDDEESEEADEDGDF.

Residues 189–232 are disordered; it reads DWADEVEENGYVASGSAKASKPRDEESWDEDDEESEEADEDGDF. Residues 212–232 form a dimerization and interaction with the viral DNA polymerase and helicase region; it reads DEESWDEDDEESEEADEDGDF. The segment covering 214–232 has biased composition (acidic residues); that stretch reads ESWDEDDEESEEADEDGDF.

It belongs to the Teseptimavirus single-stranded DNA-binding protein family. In terms of assembly, homodimer. Interacts (via C-terminus) with the viral DNA polymerase. Interacts with the viral helicase/primase. Part of the replicase complex that includes the DNA polymerase, host thioredoxin, the primase/helicase and the single-stranded DNA binding protein.

Its function is as follows. Single-stranded DNA-binding protein that participates in viral DNA replication, formation of concatemers, recombination and repair of double-stranded breaks. Coats the lagging-strand ssDNA as the replication fork advances and stimulates the activities of viral DNA polymerase and primase/helicase. Coordinates simultaneous synthesis of leading- and lagging-strands. Together with DNA primase/helicase, promotes pairing of two homologous DNA molecules containing complementary single-stranded regions and mediates homologous DNA strand exchange. Also promotes the formation of joint molecules. Disrupts loops, hairpins and other secondary structures present on ssDNA to reduce and eliminate pausing of viral DNA polymerase at specific sites during elongation. The chain is Single-stranded DNA-binding protein from Escherichia phage T7 (Bacteriophage T7).